Reading from the N-terminus, the 521-residue chain is MTRILSEEVSPIWILTAIVVVAYTTVRYLRSPWRNLPPGPRGLPLIGNLLELRGKQWLTFTELGKKYGDLMYFNVAGQPLVVLNSQKVAADLLDRRAGKYSDRPRNIVASDIMTGGNLVVFTRYGDVWRRMRKAAHEGLNKGVVYKYHPIQTAEAVLLTAGVLAEPEKWNSHIRRTAASAIMSMVYDTPPTSEQDPSVKNINDFVARLTRAAMPGAHFVEFFPWMRYIPSKYAKWKREAEESYTKDSAMFEGLFNGVKDRVAKGDERPSLASTLIQDAGRHDLTDRENSWLAGTMYAAGAETTSGVMSWWTLAMIVYPETQKRAQAELDAVVGRDRLPSFADYEHLPYIRAMVKEALRWRMVDPVGLPHTSTEDDVYDGYFIPAGTILIANVWHLNRDPEIYGPDAEHFNPARHLDKDGKLAPGPADTKEESHVTYGFGRRICVGRHVANNSLFIDIAMMLWAMNIERATDENGVPLPLDVDGCIEDGLVTRPVPFKAKITPRFQEAQAIVEQERELLGYH.

A helical membrane pass occupies residues 9-26 (VSPIWILTAIVVVAYTTV). Position 443 (C443) interacts with heme. N-linked (GlcNAc...) asparagine glycosylation occurs at N450.

Belongs to the cytochrome P450 family. Heme serves as cofactor.

The protein localises to the membrane. Its pathway is secondary metabolite biosynthesis. Its function is as follows. Cytochrome P450 monooxygenase, part of the gene cluster that mediates the biosynthesis of melleolides, a range of antifungal and phytotoxic polyketide derivatives composed of an orsellinic acid (OA) moiety esterified to various sesquiterpene alcohols. The first step in melleolides biosynthesis is performed by the delta(6)-protoilludene synthase PRO1 which catalyzes the cyclization of farnesyl diphosphate to protoilludene. The orsellinic acid synthase armB produces OA by condensing acetyl-CoA with 3 malonyl-CoA units in a three-round chain elongation reaction folowed by a C2-C7 ring closure. ArmB further catalyzes the trans-esterification of OA to the various sesquiterpene alcohols resulting from the hydroxylation of protoilludene. The melleolides cluster also includes 5 cytochrome P450 monooxygenases, 4 NAD(+)-dependent oxidoreductases, one flavin-dependent oxidoreductase, and one O-methyltransferase. The cytochrome P450 monooxygenases may be involved in protoilludene hydroxylation to elaborate melleolides with multiple alcohol groups, such as melleolide D, which carries alcohol functionalities at C-4, C-5, C-10, and C-13. The role of the NAD(+)-dependent enzymes remains unknown. Numerous melleolides, including arnamial, show 5'-O-methylation of the aromatic moiety which may be catalyzed by the methyltransferase encoded in the cluster. The flavin-dependent oxidoreductase might represent the dehydrogenase yielding the aldehyde in position 1 of arnamial and other melleolides. Finally, several halogenase localized outside of the cluster, are able to catalyze the transfer of a single chlorine atom to the melleolide backbone, resulting in a 6'-chloromelleolide product. In Armillaria gallica (Bulbous honey fungus), this protein is Cytochrome P450 monooxygenase ARMGADRAFT_1018420.